The sequence spans 103 residues: Trp operon repressor homolog (103 aa).

Residues 59-82 (QRQISQMLGVGIATITRGSNELKS) mediate DNA binding.

The protein belongs to the TrpR family. In terms of assembly, homodimer.

The protein localises to the cytoplasm. This protein is an aporepressor. When complexed with L-tryptophan it binds the operator region of the trp operon and prevents the initiation of transcription. This is Trp operon repressor homolog from Vibrio parahaemolyticus serotype O3:K6 (strain RIMD 2210633).